The primary structure comprises 511 residues: Lysine--tRNA ligase (511 aa).

Positions 421 and 428 each coordinate Mg(2+).

The protein belongs to the class-II aminoacyl-tRNA synthetase family. As to quaternary structure, homodimer. It depends on Mg(2+) as a cofactor.

The protein resides in the cytoplasm. The enzyme catalyses tRNA(Lys) + L-lysine + ATP = L-lysyl-tRNA(Lys) + AMP + diphosphate. The protein is Lysine--tRNA ligase of Janthinobacterium sp. (strain Marseille) (Minibacterium massiliensis).